Reading from the N-terminus, the 94-residue chain is Phosphoribosyl-ATP pyrophosphatase (94 aa).

This sequence belongs to the PRA-PH family.

Its subcellular location is the cytoplasm. It carries out the reaction 1-(5-phospho-beta-D-ribosyl)-ATP + H2O = 1-(5-phospho-beta-D-ribosyl)-5'-AMP + diphosphate + H(+). Its pathway is amino-acid biosynthesis; L-histidine biosynthesis; L-histidine from 5-phospho-alpha-D-ribose 1-diphosphate: step 2/9. In Pyrobaculum calidifontis (strain DSM 21063 / JCM 11548 / VA1), this protein is Phosphoribosyl-ATP pyrophosphatase.